Reading from the N-terminus, the 369-residue chain is Flagellar P-ring protein (369 aa).

An N-terminal signal peptide occupies residues 1-23; that stretch reads MRSLLRWMGVLLLCGLCAAPAQA.

This sequence belongs to the FlgI family. The basal body constitutes a major portion of the flagellar organelle and consists of four rings (L,P,S, and M) mounted on a central rod.

It localises to the periplasm. The protein localises to the bacterial flagellum basal body. Assembles around the rod to form the L-ring and probably protects the motor/basal body from shearing forces during rotation. This Chromohalobacter salexigens (strain ATCC BAA-138 / DSM 3043 / CIP 106854 / NCIMB 13768 / 1H11) protein is Flagellar P-ring protein.